The following is an 85-amino-acid chain: uncharacterized protein (85 aa).

The chain crosses the membrane as a helical span at residues 39–59 (FILFEISMYIIFIVTFCYKII).

The protein localises to the host membrane. This is an uncharacterized protein from Gallid herpesvirus 2 (strain Chicken/Md5/ATCC VR-987) (GaHV-2).